The primary structure comprises 715 residues: Probable phospholipase YOR022C, mitochondrial (715 aa).

The transit peptide at 1–22 (MLRFTHRGLPSSTRFRNIFVRL) directs the protein to the mitochondrion. Disordered regions lie at residues 161–180 (YPVD…NKDE), 242–268 (TSTS…SRSI), and 311–340 (YNNA…RQIR). A compositionally biased stretch (low complexity) spans 242-251 (TSTSFKAAKT). The segment covering 311-324 (YNNADNSQGANASS) has biased composition (polar residues). Ser-501 is an active-site residue. The region spanning 519-700 (LEFQVDNLFF…AAFILKEILS (182 aa)) is the DDHD domain.

The protein belongs to the PA-PLA1 family.

It localises to the mitochondrion. Probable phospholipase that hydrolyzes phosphatidic acid. This chain is Probable phospholipase YOR022C, mitochondrial, found in Saccharomyces cerevisiae (strain ATCC 204508 / S288c) (Baker's yeast).